The sequence spans 353 residues: ATP-dependent kinase YFH7 (353 aa).

Residue 31–39 (GSPGSGKST) coordinates ATP.

This sequence belongs to the YFH7 family.

Its function is as follows. ATP-dependent kinase that could be involved in endoplasmic reticulum membrane assembly. This chain is ATP-dependent kinase YFH7 (YFH7), found in Saccharomyces cerevisiae (strain JAY291) (Baker's yeast).